Here is a 503-residue protein sequence, read N- to C-terminus: Putative cytochrome P450 71A28 (503 aa).

A helical membrane pass occupies residues 1 to 21 (MILISLCFTTFLAFLFLNPLL). Residue cysteine 443 participates in heme binding.

This sequence belongs to the cytochrome P450 family. Requires heme as cofactor.

It is found in the membrane. This Arabidopsis thaliana (Mouse-ear cress) protein is Putative cytochrome P450 71A28 (CYP71A28).